Consider the following 288-residue polypeptide: Bifunctional protein FolD 2 (288 aa).

Residues 166-168 (GRS) and serine 191 each bind NADP(+).

It belongs to the tetrahydrofolate dehydrogenase/cyclohydrolase family. As to quaternary structure, homodimer.

It catalyses the reaction (6R)-5,10-methylene-5,6,7,8-tetrahydrofolate + NADP(+) = (6R)-5,10-methenyltetrahydrofolate + NADPH. The enzyme catalyses (6R)-5,10-methenyltetrahydrofolate + H2O = (6R)-10-formyltetrahydrofolate + H(+). The protein operates within one-carbon metabolism; tetrahydrofolate interconversion. Its function is as follows. Catalyzes the oxidation of 5,10-methylenetetrahydrofolate to 5,10-methenyltetrahydrofolate and then the hydrolysis of 5,10-methenyltetrahydrofolate to 10-formyltetrahydrofolate. The polypeptide is Bifunctional protein FolD 2 (Frankia alni (strain DSM 45986 / CECT 9034 / ACN14a)).